The primary structure comprises 267 residues: Hydroxynaphthalene reductase-like protein Arp2 (267 aa).

NADP(+) contacts are provided by Ile-25, Asn-45, Asp-71, and Asn-98. Active-site proton donor residues include Ser-147 and Ser-148. Residues Tyr-162, Lys-166, Val-195, and Thr-197 each coordinate NADP(+). Tyr-162 (proton acceptor) is an active-site residue. The active-site Lowers pKa of active site Tyr is Lys-166.

This sequence belongs to the short-chain dehydrogenases/reductases (SDR) family.

In terms of biological role, hydroxynaphthalene reductase-like protein; part of the Pks2 gene cluster that mediates the formation of infectious structures (appressoria), enabling these fungi to kill insects faster. The product of the Pks2 gene cluster is different from the one of Pks1 and has still not been identified. This is Hydroxynaphthalene reductase-like protein Arp2 from Metarhizium brunneum (strain ARSEF 3297).